We begin with the raw amino-acid sequence, 81 residues long: Costars family protein ABRACL (81 aa).

Residue Met-1 is modified to N-acetylmethionine.

The protein belongs to the costars family.

The sequence is that of Costars family protein ABRACL (Abracl) from Mus musculus (Mouse).